Reading from the N-terminus, the 567-residue chain is Phosphoglucomutase-like protein 5 (567 aa).

The segment at 1–26 (MEGSPIPVLTVPTAPYEDQRPAGGGG) is disordered. Thr-120 is subject to Phosphothreonine. Ser-122 bears the Phosphoserine mark.

The protein belongs to the phosphohexose mutase family. As to quaternary structure, interacts with DMD/dystrophin; the interaction is direct. Interacts with UTRN/utrophin. Detected in smooth and cardiac muscle at high levels and in skeletal muscle at low level. Present in other tissues due to vascular or other smooth muscle component. Low levels are present in liver, kidney, skin and brain (at protein level).

Its subcellular location is the cell junction. It localises to the adherens junction. It is found in the cytoplasm. The protein localises to the cytoskeleton. The protein resides in the cell membrane. Its subcellular location is the sarcolemma. Component of adherens-type cell-cell and cell-matrix junctions. Has no phosphoglucomutase activity in vitro. This chain is Phosphoglucomutase-like protein 5, found in Homo sapiens (Human).